The following is a 409-amino-acid chain: Multidrug efflux pump Tap (409 aa).

12 consecutive transmembrane segments (helical) span residues 10-30, 46-66, 80-98, 104-123, 144-168, 174-193, 218-240, 260-282, 289-308, 313-335, 348-370, and 375-397; these read LLIL…IVAF, IVAM…GAAV, LLSA…IFGV, AVLA…GMTA, SVYE…IATL, MWVT…VLRL, FVWY…GLYM, LGWV…AVMS, ATML…IAFL, LILV…YNYV, VVGV…AGPL, and GLHA…AVFL.

It belongs to the major facilitator superfamily. Drug:H(+) antiporter-3 (DHA3) (TC 2.A.1.21) family.

The protein localises to the cell inner membrane. With respect to regulation, efflux activity is inhibited by carbonyl cyanide m-chlorophenylhydrazone (CCCP) and reserpine, but not by o-vanadate or chlorpromazine (CPZ). In terms of biological role, efflux pump that contributes to intrinsic antibiotic resistance. The pump uses the electrochemical gradient as a source of energy. Confers low-level resistance to tetracycline and to several aminoglycosides, including streptomycin, gentamicin, 2'-N-ethylnetilmicin and 6'-N-ethylnetilmicin. The polypeptide is Multidrug efflux pump Tap (Mycolicibacterium fortuitum (Mycobacterium fortuitum)).